We begin with the raw amino-acid sequence, 84 residues long: ATP synthase subunit c (84 aa).

Transmembrane regions (helical) follow at residues 9–29 (IIGA…GFAI) and 54–74 (IVAG…LLFI).

Belongs to the ATPase C chain family. In terms of assembly, F-type ATPases have 2 components, F(1) - the catalytic core - and F(0) - the membrane proton channel. F(1) has five subunits: alpha(3), beta(3), gamma(1), delta(1), epsilon(1). F(0) has three main subunits: a(1), b(2) and c(10-14). The alpha and beta chains form an alternating ring which encloses part of the gamma chain. F(1) is attached to F(0) by a central stalk formed by the gamma and epsilon chains, while a peripheral stalk is formed by the delta and b chains.

It is found in the cell inner membrane. Its function is as follows. F(1)F(0) ATP synthase produces ATP from ADP in the presence of a proton or sodium gradient. F-type ATPases consist of two structural domains, F(1) containing the extramembraneous catalytic core and F(0) containing the membrane proton channel, linked together by a central stalk and a peripheral stalk. During catalysis, ATP synthesis in the catalytic domain of F(1) is coupled via a rotary mechanism of the central stalk subunits to proton translocation. In terms of biological role, key component of the F(0) channel; it plays a direct role in translocation across the membrane. A homomeric c-ring of between 10-14 subunits forms the central stalk rotor element with the F(1) delta and epsilon subunits. This is ATP synthase subunit c from Actinobacillus pleuropneumoniae serotype 7 (strain AP76).